Reading from the N-terminus, the 541-residue chain is MLQLARFYSLARTKAIHSHGAPFRPEYALKCGLEIHTQLNTKNKLFSQSTNSATSLVDAPNHHTSYYDIALPGTQPVLNLEAILFAMKLSLALGSQVNSISQFDRKHYFYGDQPQGYQLTQHYRPFARGGKINLSKELDDIDESAKEIGILQLQIEQDTGKSHYTETDKDVITLVDLNRSNVPLIELVTKPDFSDIKQVRAFIKKYQNLVRHLHISSGDLETGAMRVDVNLSINEYARVELKNLPNTSSIINAIKYEYQRQVELISVGDTSSLMEPETRGWTGSSTVKLRSKETTIDYRYMPDPELPYINLAPDVISGVRGLMPQLPDDIMRILMKKPYQLSLKDAKILTYNSNQNDMYNHEALRSYYLDTFREFSKLAGERSNAKLPTNWIIHEFLGDLNKLQIPLAKAKEILPPPVFAQFLKLLHEEVISATSGKMLLFHILESFKQSNCQDLSIPDFSKLIEKFELHAINQVDPQELMDLCNDVIAQHTDDTFIRNLVTGKKKSSLKFLIGQGMRRSQGRIKANEFEKKFKEILNIQW.

The protein belongs to the GatB/GatE family. GatB subfamily. Subunit of the heterotrimeric GatFAB amidotransferase (AdT) complex, composed of A, B and F subunits.

It localises to the mitochondrion. It catalyses the reaction L-glutamyl-tRNA(Gln) + L-glutamine + ATP + H2O = L-glutaminyl-tRNA(Gln) + L-glutamate + ADP + phosphate + H(+). Functionally, allows the formation of correctly charged Gln-tRNA(Gln) through the transamidation of misacylated Glu-tRNA(Gln) in the mitochondria. The reaction takes place in the presence of glutamine and ATP through an activated gamma-phospho-Glu-tRNA(Gln). The chain is Glutamyl-tRNA(Gln) amidotransferase subunit B, mitochondrial from Saccharomyces cerevisiae (strain YJM789) (Baker's yeast).